The sequence spans 122 residues: Ribonuclease P protein component (122 aa).

This sequence belongs to the RnpA family. As to quaternary structure, consists of a catalytic RNA component (M1 or rnpB) and a protein subunit.

The catalysed reaction is Endonucleolytic cleavage of RNA, removing 5'-extranucleotides from tRNA precursor.. In terms of biological role, RNaseP catalyzes the removal of the 5'-leader sequence from pre-tRNA to produce the mature 5'-terminus. It can also cleave other RNA substrates such as 4.5S RNA. The protein component plays an auxiliary but essential role in vivo by binding to the 5'-leader sequence and broadening the substrate specificity of the ribozyme. The protein is Ribonuclease P protein component of Lactobacillus helveticus (strain DPC 4571).